A 33-amino-acid polypeptide reads, in one-letter code: Photosystem II reaction center protein Psb30 (33 aa).

A helical transmembrane segment spans residues isoleucine 5–leucine 25.

This sequence belongs to the Psb30/Ycf12 family. PSII is composed of 1 copy each of membrane proteins PsbA, PsbB, PsbC, PsbD, PsbE, PsbF, PsbH, PsbI, PsbJ, PsbK, PsbL, PsbM, PsbT, PsbX, PsbY, PsbZ, Psb30/Ycf12, peripheral proteins of the oxygen-evolving complex and a large number of cofactors. It forms dimeric complexes.

The protein resides in the plastid. It is found in the chloroplast thylakoid membrane. In terms of biological role, a core subunit of photosystem II (PSII), probably helps stabilize the reaction center. The sequence is that of Photosystem II reaction center protein Psb30 from Angiopteris evecta (Mule's foot fern).